A 377-amino-acid polypeptide reads, in one-letter code: tRNA-specific 2-thiouridylase MnmA (377 aa).

ATP is bound by residues 18–25 (AMSGGVDS) and M44. The active-site Nucleophile is the C113. A disulfide bond links C113 and C210. Residue G137 coordinates ATP. The interval 159 to 161 (RDQ) is interaction with tRNA. Residue C210 is the Cysteine persulfide intermediate of the active site.

It belongs to the MnmA/TRMU family.

It is found in the cytoplasm. It carries out the reaction S-sulfanyl-L-cysteinyl-[protein] + uridine(34) in tRNA + AH2 + ATP = 2-thiouridine(34) in tRNA + L-cysteinyl-[protein] + A + AMP + diphosphate + H(+). Its function is as follows. Catalyzes the 2-thiolation of uridine at the wobble position (U34) of tRNA, leading to the formation of s(2)U34. The polypeptide is tRNA-specific 2-thiouridylase MnmA (Rhodospirillum rubrum (strain ATCC 11170 / ATH 1.1.1 / DSM 467 / LMG 4362 / NCIMB 8255 / S1)).